The sequence spans 140 residues: Large ribosomal subunit protein bL17 (140 aa).

The protein belongs to the bacterial ribosomal protein bL17 family. In terms of assembly, part of the 50S ribosomal subunit. Contacts protein L32.

In Paramagnetospirillum magneticum (strain ATCC 700264 / AMB-1) (Magnetospirillum magneticum), this protein is Large ribosomal subunit protein bL17.